The primary structure comprises 196 residues: dTTP/UTP pyrophosphatase (196 aa).

Asp-72 serves as the catalytic Proton acceptor.

Belongs to the Maf family. YhdE subfamily. It depends on a divalent metal cation as a cofactor.

It localises to the cytoplasm. It catalyses the reaction dTTP + H2O = dTMP + diphosphate + H(+). It carries out the reaction UTP + H2O = UMP + diphosphate + H(+). In terms of biological role, nucleoside triphosphate pyrophosphatase that hydrolyzes dTTP and UTP. May have a dual role in cell division arrest and in preventing the incorporation of modified nucleotides into cellular nucleic acids. The polypeptide is dTTP/UTP pyrophosphatase (Chlamydia trachomatis serovar L2 (strain ATCC VR-902B / DSM 19102 / 434/Bu)).